The following is a 689-amino-acid chain: Glycine--tRNA ligase beta subunit (689 aa).

The protein belongs to the class-II aminoacyl-tRNA synthetase family. As to quaternary structure, tetramer of two alpha and two beta subunits.

It is found in the cytoplasm. It catalyses the reaction tRNA(Gly) + glycine + ATP = glycyl-tRNA(Gly) + AMP + diphosphate. The sequence is that of Glycine--tRNA ligase beta subunit (glyS) from Coxiella burnetii (strain RSA 493 / Nine Mile phase I).